We begin with the raw amino-acid sequence, 190 residues long: MTETPNTSSEEIQTSEPSSDNELQTLQQENANLKAELKEKNDRYLMALAEAENSRKRLQKERTEMMQYAVENALLDFLPPMESMEKALGFASQTSDEVKNWAIGFQMILQQFKQVFEDKGVVEYSSKGELFNPYLHEAVEIEETTDIPEGTILEEFTKGYKIGDRPIRVAKVKVAKFPTKGNNDSNEEKE.

Positions 1-31 (MTETPNTSSEEIQTSEPSSDNELQTLQQENA) are enriched in polar residues. A disordered region spans residues 1 to 34 (MTETPNTSSEEIQTSEPSSDNELQTLQQENANLK).

This sequence belongs to the GrpE family. Homodimer.

The protein resides in the cytoplasm. Participates actively in the response to hyperosmotic and heat shock by preventing the aggregation of stress-denatured proteins, in association with DnaK and GrpE. It is the nucleotide exchange factor for DnaK and may function as a thermosensor. Unfolded proteins bind initially to DnaJ; upon interaction with the DnaJ-bound protein, DnaK hydrolyzes its bound ATP, resulting in the formation of a stable complex. GrpE releases ADP from DnaK; ATP binding to DnaK triggers the release of the substrate protein, thus completing the reaction cycle. Several rounds of ATP-dependent interactions between DnaJ, DnaK and GrpE are required for fully efficient folding. The protein is Protein GrpE of Chlamydia muridarum (strain MoPn / Nigg).